A 363-amino-acid chain; its full sequence is Chorismate synthase (363 aa).

Positions 48 and 54 each coordinate NADP(+). FMN contacts are provided by residues 125 to 127 (RSS), 238 to 239 (NA), glycine 278, 293 to 297 (KPTSS), and arginine 319.

Belongs to the chorismate synthase family. As to quaternary structure, homotetramer. It depends on FMNH2 as a cofactor.

It catalyses the reaction 5-O-(1-carboxyvinyl)-3-phosphoshikimate = chorismate + phosphate. It participates in metabolic intermediate biosynthesis; chorismate biosynthesis; chorismate from D-erythrose 4-phosphate and phosphoenolpyruvate: step 7/7. Catalyzes the anti-1,4-elimination of the C-3 phosphate and the C-6 proR hydrogen from 5-enolpyruvylshikimate-3-phosphate (EPSP) to yield chorismate, which is the branch point compound that serves as the starting substrate for the three terminal pathways of aromatic amino acid biosynthesis. This reaction introduces a second double bond into the aromatic ring system. The protein is Chorismate synthase of Acidithiobacillus ferrooxidans (strain ATCC 23270 / DSM 14882 / CIP 104768 / NCIMB 8455) (Ferrobacillus ferrooxidans (strain ATCC 23270)).